A 193-amino-acid polypeptide reads, in one-letter code: MKKVKKKKSDSRRRRNSISPQTSSDSSQQPSSETPPSCPEPASPPSKPQPCQESTTPHQVNPEPKPQQHTPQPLPPPEKPASSPFLVPMEPKPILPSRKAAVPLTYVAPRSCSCAACPGSSACWHRLGLCHSRIFDVLLPRDWSSMPGRGVPNLLTFYRKPSRKYCAPRNSRASSSRNCCCGSGGLGSCLLHG.

A compositionally biased stretch (basic residues) spans 1–16 (MKKVKKKKSDSRRRRN). A disordered region spans residues 1–92 (MKKVKKKKSD…SPFLVPMEPK (92 aa)). Low complexity predominate over residues 17–35 (SISPQTSSDSSQQPSSETP). The segment covering 36 to 48 (PSCPEPASPPSKP) has biased composition (pro residues).

In terms of tissue distribution, strongly expressed in testis. Faintly expressed in epididymis, ovary, spleen, kidney, lung, heart, brain, epididymis, liver and skeletal muscle.

It localises to the cell projection. The protein localises to the cilium. It is found in the flagellum. This chain is Spermatogenesis-associated protein 3 (Spata3), found in Mus musculus (Mouse).